A 570-amino-acid polypeptide reads, in one-letter code: Capsid vertex component 2 (570 aa).

Residues Met1–Trp54 are interaction with major capsid protein/MCP. The tract at residues Gln102–Gln123 is disordered.

The protein belongs to the herpesviridae CVC2 protein family. As to quaternary structure, heterodimerizes with CVC1. Interacts with major capsid protein/MCP and triplex capsid protein 1/TRX1 at the pentamer vertices. Interacts with the large tegument protein/LTP.

The protein resides in the virion. The protein localises to the host nucleus. In terms of biological role, capsid vertex-specific component that plays a role during viral DNA encapsidation, assuring correct genome cleavage and presumably stabilizing capsids that contain full-length viral genomes. Participates in the interaction between the capsid and the tegument through interaction with the large tegument protein/LTP. This is Capsid vertex component 2 from Homo sapiens (Human).